A 473-amino-acid chain; its full sequence is MKTLYSLRRFYHVETLFNGTLALAGRDQETTGFAWWAGNARLINLSGKLLGAHVAHAGLIVFWAGAMNLFEVAHFVPEKPMYEQGLILLPHLATLGWGVGPGGEVIDTFPYFVSGVLHLISSAVLGFGGIYHALLGPETLEESFPFFGYVWKDRNKMTTILGIHLILLGIGAFLLVFKALYFGGVYDTWAPGGGDVRKITNLTLSPGIIFGYLLKSPFGGEGWIVSVDDLEDIIGGHVWLGSICILGGIWHILTKPFAWARRALVWSGEAYLSYSLGALSIFGFTACCFVWFNNTVYPSEFYGPTGPEASQAQAFTFLVRDQRLGANVGSAQGPTGLGKYLMRSPTGEVIFGGETMRFWDLRAPWLEPLRGPNGLDLSRLKKDIQPWQERRSAEYMTHAPLGSLNSVGGVATEINAVNYVSPRSWLATSHFVLGFFFFVGHLWHAGRARAAAAGFEKGIDRDFEPVLSMTPLN.

The propeptide occupies 1–14 (MKTLYSLRRFYHVE). An N-acetylthreonine modification is found at T15. T15 is modified (phosphothreonine). The next 5 membrane-spanning stretches (helical) occupy residues 69-93 (LFEV…PHLA), 134-155 (LLGP…KDRN), 178-200 (KALY…RKIT), 255-275 (KPFA…LSYS), and 291-312 (WFNN…ASQA). E367 lines the [CaMn4O5] cluster pocket. Residues 447-471 (RARAAAAGFEKGIDRDFEPVLSMTP) traverse the membrane as a helical segment.

It belongs to the PsbB/PsbC family. PsbC subfamily. PSII is composed of 1 copy each of membrane proteins PsbA, PsbB, PsbC, PsbD, PsbE, PsbF, PsbH, PsbI, PsbJ, PsbK, PsbL, PsbM, PsbT, PsbX, PsbY, PsbZ, Psb30/Ycf12, at least 3 peripheral proteins of the oxygen-evolving complex and a large number of cofactors. It forms dimeric complexes. The cofactor is Binds multiple chlorophylls and provides some of the ligands for the Ca-4Mn-5O cluster of the oxygen-evolving complex. It may also provide a ligand for a Cl- that is required for oxygen evolution. PSII binds additional chlorophylls, carotenoids and specific lipids..

The protein localises to the plastid. Its subcellular location is the chloroplast thylakoid membrane. One of the components of the core complex of photosystem II (PSII). It binds chlorophyll and helps catalyze the primary light-induced photochemical processes of PSII. PSII is a light-driven water:plastoquinone oxidoreductase, using light energy to abstract electrons from H(2)O, generating O(2) and a proton gradient subsequently used for ATP formation. This Coffea arabica (Arabian coffee) protein is Photosystem II CP43 reaction center protein.